The following is a 202-amino-acid chain: Peptidyl-tRNA hydrolase (202 aa).

A tRNA-binding site is contributed by tyrosine 22. The active-site Proton acceptor is histidine 27. The tRNA site is built by phenylalanine 69, asparagine 71, and asparagine 117.

This sequence belongs to the PTH family. Monomer.

Its subcellular location is the cytoplasm. The catalysed reaction is an N-acyl-L-alpha-aminoacyl-tRNA + H2O = an N-acyl-L-amino acid + a tRNA + H(+). Hydrolyzes ribosome-free peptidyl-tRNAs (with 1 or more amino acids incorporated), which drop off the ribosome during protein synthesis, or as a result of ribosome stalling. Its function is as follows. Catalyzes the release of premature peptidyl moieties from peptidyl-tRNA molecules trapped in stalled 50S ribosomal subunits, and thus maintains levels of free tRNAs and 50S ribosomes. The polypeptide is Peptidyl-tRNA hydrolase (Thiobacillus denitrificans (strain ATCC 25259 / T1)).